The chain runs to 166 residues: Large ribosomal subunit protein uL10 (166 aa).

It belongs to the universal ribosomal protein uL10 family. In terms of assembly, part of the ribosomal stalk of the 50S ribosomal subunit. The N-terminus interacts with L11 and the large rRNA to form the base of the stalk. The C-terminus forms an elongated spine to which L12 dimers bind in a sequential fashion forming a multimeric L10(L12)X complex.

Forms part of the ribosomal stalk, playing a central role in the interaction of the ribosome with GTP-bound translation factors. The protein is Large ribosomal subunit protein uL10 of Hydrogenovibrio crunogenus (strain DSM 25203 / XCL-2) (Thiomicrospira crunogena).